Consider the following 247-residue polypeptide: ATP synthase subunit a, chloroplastic (247 aa).

5 helical membrane-spanning segments follow: residues 38-58, 95-115, 134-154, 199-219, and 220-240; these read QVLI…VIAV, VPFI…GALL, INTT…AGLS, LVVV…VMFL, and GLFT…AYIG.

The protein belongs to the ATPase A chain family. In terms of assembly, F-type ATPases have 2 components, CF(1) - the catalytic core - and CF(0) - the membrane proton channel. CF(1) has five subunits: alpha(3), beta(3), gamma(1), delta(1), epsilon(1). CF(0) has four main subunits: a, b, b' and c.

Its subcellular location is the plastid. It localises to the chloroplast thylakoid membrane. In terms of biological role, key component of the proton channel; it plays a direct role in the translocation of protons across the membrane. In Hordeum vulgare (Barley), this protein is ATP synthase subunit a, chloroplastic.